A 241-amino-acid polypeptide reads, in one-letter code: MSSVVNAAYAEYNGKEKGDQEDPRVLIPQLCRLFYELGWVTGTGGGISLRHGEHIYIAPSGVQKERIQPEDLFVCDIDEKDISCPPPQKKLKKSQCTPPFMNAYTMRGAQAVIHTHSKSAVMATLLFPGKEFRITHQEMIKGIRKGNSGTNFRYDDTLVVPIIENTPEEKDLKERMARAMDMYPDSCAVLVRRHGVYVWGETWEKAKTMCECYDYLFDIAVQMKQSGLDPSAFPTEEKGIV.

Cys96 is a substrate binding site. Zn(2+)-binding residues include His114 and His116. Residue Glu138 is the Proton donor/acceptor of the active site. Zn(2+) is bound at residue His194.

It belongs to the aldolase class II family. MtnB subfamily. Zn(2+) is required as a cofactor.

It is found in the cytoplasm. The catalysed reaction is 5-(methylsulfanyl)-D-ribulose 1-phosphate = 5-methylsulfanyl-2,3-dioxopentyl phosphate + H2O. It functions in the pathway amino-acid biosynthesis; L-methionine biosynthesis via salvage pathway; L-methionine from S-methyl-5-thio-alpha-D-ribose 1-phosphate: step 2/6. Catalyzes the dehydration of methylthioribulose-1-phosphate (MTRu-1-P) into 2,3-diketo-5-methylthiopentyl-1-phosphate (DK-MTP-1-P). Functions in the methionine salvage pathway. May play a role in apoptosis. This is Methylthioribulose-1-phosphate dehydratase from Danio rerio (Zebrafish).